We begin with the raw amino-acid sequence, 125 residues long: Small ribosomal subunit protein eS6 (125 aa).

It belongs to the eukaryotic ribosomal protein eS6 family.

The polypeptide is Small ribosomal subunit protein eS6 (Thermococcus onnurineus (strain NA1)).